Consider the following 312-residue polypeptide: Molybdenum cofactor biosynthesis bifunctional protein (312 aa).

The interval 1–155 is molybdenum cofactor biosynthesis protein C; that stretch reads MEFTHLDENG…GGKSSAAEYH (155 aa). Substrate-binding positions include 74 to 76 and 110 to 111; these read LCH and ME. The active site involves D125. The tract at residues 156-312 is molybdenum cofactor biosynthesis protein B; the sequence is PRTAILVMSD…FPMLKGDGHA (157 aa).

The protein in the N-terminal section; belongs to the MoaC family. It in the C-terminal section; belongs to the MoaB/Mog family.

The catalysed reaction is (8S)-3',8-cyclo-7,8-dihydroguanosine 5'-triphosphate = cyclic pyranopterin phosphate + diphosphate. It functions in the pathway cofactor biosynthesis; molybdopterin biosynthesis. In terms of biological role, catalyzes the conversion of (8S)-3',8-cyclo-7,8-dihydroguanosine 5'-triphosphate to cyclic pyranopterin monophosphate (cPMP). The polypeptide is Molybdenum cofactor biosynthesis bifunctional protein (moaCB) (Chlorobaculum tepidum (strain ATCC 49652 / DSM 12025 / NBRC 103806 / TLS) (Chlorobium tepidum)).